We begin with the raw amino-acid sequence, 575 residues long: Sclareol synthase, chloroplastic (575 aa).

The N-terminal 51 residues, 1–51 (MSLAFNVGVTPFSGQRVGSRKEKFPVQGFPVTTPNRSRLIVNCSLTTIDFM), are a transit peptide targeting the chloroplast. 5 residues coordinate Mg(2+): Asp329, Asp333, Asn473, Ser477, and Glu481. Residues 329–333 (DDFFD) carry the DDXXD motif motif.

The protein belongs to the terpene synthase family.

The protein localises to the plastid. It localises to the chloroplast. It catalyses the reaction 8-hydroxycopalyl diphosphate + H2O = sclareol + diphosphate. It functions in the pathway secondary metabolite biosynthesis; terpenoid biosynthesis. Functionally, involved in the biosynthesis of labdane-type diterpenoid including sclareol, a diterpene-diol that is used as fragrance and flavoring, and has anticancer effects (able to kill leukemic and colon cancer cells by apoptosis). Sclareol can also be used as synthesis precursor of ambergris substitution fragance products such as ambrox. Terpene synthase that catalyzes the conversion of 8-hydroxy-copalyl diphosphate to sclareol. In Salvia sclarea (Clary sage), this protein is Sclareol synthase, chloroplastic.